The chain runs to 130 residues: Fumarate reductase subunit C (130 aa).

3 helical membrane-spanning segments follow: residues 30–50 (EGTS…VFAL), 60–80 (FVSF…LFAA), and 110–130 (IKAL…VALL).

The protein belongs to the FrdC family. In terms of assembly, part of an enzyme complex containing four subunits: a flavoprotein (FrdA), an iron-sulfur protein (FrdB), and two hydrophobic anchor proteins (FrdC and FrdD).

The protein localises to the cell inner membrane. Functionally, two distinct, membrane-bound, FAD-containing enzymes are responsible for the catalysis of fumarate and succinate interconversion; fumarate reductase is used in anaerobic growth, and succinate dehydrogenase is used in aerobic growth. Anchors the catalytic components of the fumarate reductase complex to the cell inner membrane, binds quinones. In Yersinia pseudotuberculosis serotype O:1b (strain IP 31758), this protein is Fumarate reductase subunit C.